The following is a 396-amino-acid chain: Probable porphobilinogen deaminase (396 aa).

The disordered stretch occupies residues 159–224 (APALHREHER…DTASSSEFEQ (66 aa)). Residues 159–245 (APALHREHER…LQQSAMERDP (87 aa)) are insert. A compositionally biased stretch (basic and acidic residues) spans 162-189 (LHREHERRTEAEKEAQSRDAREQRRGDY). The span at 200–215 (LDTEDGEEGAADDGDD) shows a compositional bias: acidic residues. Cys328 carries the post-translational modification S-(dipyrrolylmethanemethyl)cysteine.

The protein belongs to the HMBS family. It depends on dipyrromethane as a cofactor.

It carries out the reaction 4 porphobilinogen + H2O = hydroxymethylbilane + 4 NH4(+). It functions in the pathway porphyrin-containing compound metabolism; protoporphyrin-IX biosynthesis; coproporphyrinogen-III from 5-aminolevulinate: step 2/4. Its function is as follows. Tetrapolymerization of the monopyrrole PBG into the hydroxymethylbilane pre-uroporphyrinogen in several discrete steps. The chain is Probable porphobilinogen deaminase (hemC) from Halobacterium salinarum (strain ATCC 700922 / JCM 11081 / NRC-1) (Halobacterium halobium).